The chain runs to 469 residues: 3-isopropylmalate dehydratase large subunit (469 aa).

Positions 347, 407, and 410 each coordinate [4Fe-4S] cluster.

It belongs to the aconitase/IPM isomerase family. LeuC type 1 subfamily. In terms of assembly, heterodimer of LeuC and LeuD. The cofactor is [4Fe-4S] cluster.

The enzyme catalyses (2R,3S)-3-isopropylmalate = (2S)-2-isopropylmalate. It functions in the pathway amino-acid biosynthesis; L-leucine biosynthesis; L-leucine from 3-methyl-2-oxobutanoate: step 2/4. Functionally, catalyzes the isomerization between 2-isopropylmalate and 3-isopropylmalate, via the formation of 2-isopropylmaleate. The chain is 3-isopropylmalate dehydratase large subunit from Proteus mirabilis (strain HI4320).